The chain runs to 427 residues: Peptidase B (427 aa).

Mn(2+)-binding residues include Lys195 and Asp200. Lys207 is an active-site residue. Residues Asp218, Asp277, and Glu279 each coordinate Mn(2+). The active site involves Arg281.

It belongs to the peptidase M17 family. In terms of assembly, homohexamer. Requires Mn(2+) as cofactor.

Its subcellular location is the cytoplasm. It catalyses the reaction Release of an N-terminal amino acid, Xaa, from a peptide or arylamide. Xaa is preferably Glu or Asp but may be other amino acids, including Leu, Met, His, Cys and Gln.. In terms of biological role, probably plays an important role in intracellular peptide degradation. The chain is Peptidase B from Escherichia fergusonii (strain ATCC 35469 / DSM 13698 / CCUG 18766 / IAM 14443 / JCM 21226 / LMG 7866 / NBRC 102419 / NCTC 12128 / CDC 0568-73).